A 286-amino-acid polypeptide reads, in one-letter code: 3-hydroxyanthranilate 3,4-dioxygenase (286 aa).

Residues 1–160 (MERCVRVKSW…SEQYRTGKPN (160 aa)) form a domain A (catalytic) region. Arg43 provides a ligand contact to O2. 3 residues coordinate Fe cation: His47, Glu53, and His91. Residue Glu53 coordinates substrate. Substrate is bound by residues Arg95 and Glu105. The tract at residues 161–177 (PDQLLKEPPFPLSTRSV) is linker. The domain B stretch occupies residues 178–286 (MEPMSLKAWL…QDPACKKPLG (109 aa)).

The protein belongs to the 3-HAO family. As to quaternary structure, monomer. Fe(2+) is required as a cofactor.

It localises to the cytoplasm. The protein resides in the cytosol. The catalysed reaction is 3-hydroxyanthranilate + O2 = (2Z,4Z)-2-amino-3-carboxymuconate 6-semialdehyde. The protein operates within cofactor biosynthesis; NAD(+) biosynthesis; quinolinate from L-kynurenine: step 3/3. In terms of biological role, catalyzes the oxidative ring opening of 3-hydroxyanthranilate to 2-amino-3-carboxymuconate semialdehyde, which spontaneously cyclizes to quinolinate. This is 3-hydroxyanthranilate 3,4-dioxygenase (Haao) from Rattus norvegicus (Rat).